A 356-amino-acid polypeptide reads, in one-letter code: NADH-quinone oxidoreductase subunit H (356 aa).

9 consecutive transmembrane segments (helical) span residues 17–37 (TGGI…LLLA), 51–71 (PNVV…KFVL), 83–103 (VVFI…WAVV), 116–136 (VGIL…IMGG), 162–182 (IGLI…STIV), 202–222 (LVLL…ALAE), 261–281 (IVLM…PGFP), 295–315 (LFLA…FAMA), and 334–354 (VFLP…VFGP).

The protein belongs to the complex I subunit 1 family. As to quaternary structure, NDH-1 is composed of 14 different subunits. Subunits NuoA, H, J, K, L, M, N constitute the membrane sector of the complex.

It is found in the cell inner membrane. The catalysed reaction is a quinone + NADH + 5 H(+)(in) = a quinol + NAD(+) + 4 H(+)(out). In terms of biological role, NDH-1 shuttles electrons from NADH, via FMN and iron-sulfur (Fe-S) centers, to quinones in the respiratory chain. The immediate electron acceptor for the enzyme in this species is believed to be ubiquinone. Couples the redox reaction to proton translocation (for every two electrons transferred, four hydrogen ions are translocated across the cytoplasmic membrane), and thus conserves the redox energy in a proton gradient. This subunit may bind ubiquinone. In Caulobacter vibrioides (strain ATCC 19089 / CIP 103742 / CB 15) (Caulobacter crescentus), this protein is NADH-quinone oxidoreductase subunit H.